The primary structure comprises 474 residues: tRNA-2-methylthio-N(6)-dimethylallyladenosine synthase (474 aa).

An MTTase N-terminal domain is found at 3–120 (KKLLIKTWGC…LPEMIRQSQS (118 aa)). Positions 12, 49, 83, 157, 161, and 164 each coordinate [4Fe-4S] cluster. Positions 143–375 (KAEGATAFVS…QQQVNSQAMR (233 aa)) constitute a Radical SAM core domain. The region spanning 378-441 (RLMLDTEQRV…ANSLRGELVR (64 aa)) is the TRAM domain.

The protein belongs to the methylthiotransferase family. MiaB subfamily. As to quaternary structure, monomer. The cofactor is [4Fe-4S] cluster.

It is found in the cytoplasm. The catalysed reaction is N(6)-dimethylallyladenosine(37) in tRNA + (sulfur carrier)-SH + AH2 + 2 S-adenosyl-L-methionine = 2-methylsulfanyl-N(6)-dimethylallyladenosine(37) in tRNA + (sulfur carrier)-H + 5'-deoxyadenosine + L-methionine + A + S-adenosyl-L-homocysteine + 2 H(+). Its function is as follows. Catalyzes the methylthiolation of N6-(dimethylallyl)adenosine (i(6)A), leading to the formation of 2-methylthio-N6-(dimethylallyl)adenosine (ms(2)i(6)A) at position 37 in tRNAs that read codons beginning with uridine. The polypeptide is tRNA-2-methylthio-N(6)-dimethylallyladenosine synthase (Aliivibrio fischeri (strain ATCC 700601 / ES114) (Vibrio fischeri)).